Reading from the N-terminus, the 314-residue chain is uncharacterized protein (314 aa).

This is an uncharacterized protein from Methanocaldococcus jannaschii (strain ATCC 43067 / DSM 2661 / JAL-1 / JCM 10045 / NBRC 100440) (Methanococcus jannaschii).